The chain runs to 562 residues: Zinc finger protein 579 (562 aa).

Residues 1-11 (MDPQPPPPAQG) show a composition bias toward pro residues. The segment at 1-45 (MDPQPPPPAQGSPPHRDRGRGRGRGRGRGRGRGRGRGGAGAPRAP) is disordered. The span at 17 to 35 (DRGRGRGRGRGRGRGRGRG) shows a compositional bias: basic residues. C2H2-type zinc fingers lie at residues 46–68 (LPCPTCGRLFRFPYYLSRHRLSH), 74–96 (HACPLCPKAFRRPAHLSRHLRGH), and 102–125 (LRCAACPRTFPEPAQLRRHLAQEH). Residue arginine 94 is modified to Omega-N-methylarginine. Disordered regions lie at residues 120 to 154 (HLAQEHAGSEVDLSTQRAVKEEPEASWGPQDEGVE) and 166 to 199 (EEATTQWPAGDSAPAAVPTSTDPRESEAKEAEAG). The segment covering 187 to 197 (DPRESEAKEAE) has biased composition (basic and acidic residues). A Phosphoserine modification is found at serine 191. 2 consecutive C2H2-type zinc fingers follow at residues 267-289 (HQCSICLKAFARPWSLSRHRLVH) and 295-317 (FVCPDCGLAFRLASYLRQHRRVH). The interval 321 to 377 (SLLAPLPGAGKKDDKASGGRNSGKGPEGGEGAECGGASEGGEGGHNGGDATPARPPA) is disordered. Over residues 340-367 (RNSGKGPEGGEGAECGGASEGGEGGHNG) the composition is skewed to gly residues. 3 C2H2-type zinc fingers span residues 382–404 (FWCPECGKGFRRRAHLRQHGVTH), 410–432 (FQCVRCQREFKRLADLARHAQVH), and 439–461 (HPCPRCPRRFSRAYSLLRHQRCH). Serine 486 carries the phosphoserine modification. Residues 505 to 530 (AHIKEEPPSPGTPPQSPPAPPVFLSA) form a disordered region. Residues 512–525 (PSPGTPPQSPPAPP) are compositionally biased toward pro residues.

This sequence belongs to the krueppel C2H2-type zinc-finger protein family.

It is found in the nucleus. Functionally, may be involved in transcriptional regulation. The chain is Zinc finger protein 579 (Znf579) from Mus musculus (Mouse).